The primary structure comprises 308 residues: HPr kinase/phosphorylase (308 aa).

Active-site residues include His141 and Lys162. Residue 156-163 participates in ATP binding; that stretch reads GKSGVGKS. Ser163 serves as a coordination point for Mg(2+). The active-site Proton acceptor; for phosphorylation activity. Proton donor; for dephosphorylation activity is Asp180. The tract at residues 204-213 is important for the catalytic mechanism of both phosphorylation and dephosphorylation; sequence MEIRGVGILD. Glu205 lines the Mg(2+) pocket. Arg246 is a catalytic residue. The interval 267–272 is important for the catalytic mechanism of dephosphorylation; it reads PVKPGR.

The protein belongs to the HPrK/P family. In terms of assembly, homohexamer. Mg(2+) serves as cofactor.

It carries out the reaction [HPr protein]-L-serine + ATP = [HPr protein]-O-phospho-L-serine + ADP + H(+). It catalyses the reaction [HPr protein]-O-phospho-L-serine + phosphate + H(+) = [HPr protein]-L-serine + diphosphate. Functionally, catalyzes the ATP- as well as the pyrophosphate-dependent phosphorylation of a specific serine residue in HPr, a phosphocarrier protein of the phosphoenolpyruvate-dependent sugar phosphotransferase system (PTS). HprK/P also catalyzes the pyrophosphate-producing, inorganic phosphate-dependent dephosphorylation (phosphorolysis) of seryl-phosphorylated HPr (P-Ser-HPr). The two antagonistic activities of HprK/P are regulated by several intracellular metabolites, which change their concentration in response to the absence or presence of rapidly metabolisable carbon sources (glucose, fructose, etc.) in the growth medium. Therefore, by controlling the phosphorylation state of HPr, HPrK/P is a sensor enzyme that plays a major role in the regulation of carbon metabolism and sugar transport: it mediates carbon catabolite repression (CCR), and regulates PTS-catalyzed carbohydrate uptake and inducer exclusion. The polypeptide is HPr kinase/phosphorylase (Peptoclostridium acidaminophilum (Eubacterium acidaminophilum)).